Consider the following 231-residue polypeptide: Uracil-DNA glycosylase (231 aa).

Asp70 functions as the Proton acceptor in the catalytic mechanism.

It belongs to the uracil-DNA glycosylase (UDG) superfamily. UNG family.

The protein resides in the cytoplasm. The catalysed reaction is Hydrolyzes single-stranded DNA or mismatched double-stranded DNA and polynucleotides, releasing free uracil.. Its function is as follows. Excises uracil residues from the DNA which can arise as a result of misincorporation of dUMP residues by DNA polymerase or due to deamination of cytosine. In Campylobacter curvus (strain 525.92), this protein is Uracil-DNA glycosylase.